Reading from the N-terminus, the 497-residue chain is Apolipoprotein N-acyltransferase (497 aa).

Transmembrane regions (helical) follow at residues 21-41, 51-71, 85-105, 119-139, 157-177, and 189-209; these read FAPF…ALLW, ALTG…WLYV, VLAL…TGWI, GMVA…FTGF, FAPV…AAWL, and FWLG…IHWT. The region spanning 221–461 is the CN hydrolase domain; sequence LQGNIPQNMK…GLHSTAQGFG (241 aa). Glu-259 acts as the Proton acceptor in catalysis. Lys-319 is an active-site residue. Cys-371 (nucleophile) is an active-site residue. Residues 472–492 traverse the membrane as a helical segment; the sequence is SLVFALIGLLLLAGSLAAFSG.

It belongs to the CN hydrolase family. Apolipoprotein N-acyltransferase subfamily.

Its subcellular location is the cell inner membrane. The catalysed reaction is N-terminal S-1,2-diacyl-sn-glyceryl-L-cysteinyl-[lipoprotein] + a glycerophospholipid = N-acyl-S-1,2-diacyl-sn-glyceryl-L-cysteinyl-[lipoprotein] + a 2-acyl-sn-glycero-3-phospholipid + H(+). Its pathway is protein modification; lipoprotein biosynthesis (N-acyl transfer). Its function is as follows. Catalyzes the phospholipid dependent N-acylation of the N-terminal cysteine of apolipoprotein, the last step in lipoprotein maturation. This Nitrosomonas europaea (strain ATCC 19718 / CIP 103999 / KCTC 2705 / NBRC 14298) protein is Apolipoprotein N-acyltransferase.